A 102-amino-acid chain; its full sequence is Large ribosomal subunit protein bL21 (102 aa).

The protein belongs to the bacterial ribosomal protein bL21 family. Part of the 50S ribosomal subunit. Contacts protein L20.

This protein binds to 23S rRNA in the presence of protein L20. This Neisseria meningitidis serogroup A / serotype 4A (strain DSM 15465 / Z2491) protein is Large ribosomal subunit protein bL21.